The primary structure comprises 79 residues: Putative antitoxin VapB12 (79 aa).

The protein belongs to the UPF0330 family.

Functionally, possibly the antitoxin component of a type II toxin-antitoxin (TA) system. Its cognate toxin is VapC12 (Potential). This Sulfurisphaera tokodaii (strain DSM 16993 / JCM 10545 / NBRC 100140 / 7) (Sulfolobus tokodaii) protein is Putative antitoxin VapB12 (vapB12).